The primary structure comprises 81 residues: MDSITSAASVVAAGLAVGLAAIGPGIGQGSASQGAVEGIARQPEAEGKIRGTLLLSLAFMESLTIYGLVVALVLLFANPFA.

The next 2 membrane-spanning stretches (helical) occupy residues 7–27 and 57–77; these read AASV…PGIG and LAFM…LLFA.

This sequence belongs to the ATPase C chain family. In terms of assembly, F-type ATPases have 2 components, F(1) - the catalytic core - and F(0) - the membrane proton channel. F(1) has five subunits: alpha(3), beta(3), gamma(1), delta(1), epsilon(1). F(0) has four main subunits: a(1), b(1), b'(1) and c(10-14). The alpha and beta chains form an alternating ring which encloses part of the gamma chain. F(1) is attached to F(0) by a central stalk formed by the gamma and epsilon chains, while a peripheral stalk is formed by the delta, b and b' chains.

It is found in the cellular thylakoid membrane. Functionally, f(1)F(0) ATP synthase produces ATP from ADP in the presence of a proton or sodium gradient. F-type ATPases consist of two structural domains, F(1) containing the extramembraneous catalytic core and F(0) containing the membrane proton channel, linked together by a central stalk and a peripheral stalk. During catalysis, ATP synthesis in the catalytic domain of F(1) is coupled via a rotary mechanism of the central stalk subunits to proton translocation. Its function is as follows. Key component of the F(0) channel; it plays a direct role in translocation across the membrane. A homomeric c-ring of between 10-14 subunits forms the central stalk rotor element with the F(1) delta and epsilon subunits. The protein is ATP synthase subunit c of Synechococcus sp. (strain CC9311).